Reading from the N-terminus, the 458-residue chain is MSLAIWQECLAQLKDELSAGDFSTWLRPLQADFNHSTLSLYSPNKYTSEWVRNKYMATIEDKVQQLVNQENPNHSVKIRLMVGNVSSVEKKPAKQIPTQAPLTNQPWEGESKAHRVPHKSNLIKKYTFDNFVEGKSNNFAIATTQQIAENPGDVYNPLFLYAHPGLGKTHLLHAVGNAILAENPESKVVYIRSERFVQDMINSIRNNTIEQFKEYYASLDALLIDDIHFFAGKDRSQEVLFQTFNSMLDAHQQVILTSDRFPKEIEGIDERLRTRFGWGLSIPIDPPELETRVAILITKAEERGLKLPDDVAFFIAKRLTITDVRVLEGAIANISAKAQFTGQGITISLVQDALRDMLAVHTKQTTIDNIQKIVAQHYRIKISDMSSKRRTRTVARPRQIAMALAKELTQHSLPEIGEAFGGRDHTTVLHACRKVQELRRENNDIQEDYKILIRTLSM.

Residues 1–79 (MSLAIWQECL…ENPNHSVKIR (79 aa)) form a domain I, interacts with DnaA modulators region. Residues 79 to 120 (RLMVGNVSSVEKKPAKQIPTQAPLTNQPWEGESKAHRVPHKS) form a domain II region. A disordered region spans residues 92-114 (PAKQIPTQAPLTNQPWEGESKAH). The segment covering 96 to 106 (IPTQAPLTNQP) has biased composition (polar residues). Residues 121–338 (NLIKKYTFDN…GAIANISAKA (218 aa)) are domain III, AAA+ region. Residues Gly-165, Gly-167, Lys-168, and Thr-169 each contribute to the ATP site. Residues 339–458 (QFTGQGITIS…YKILIRTLSM (120 aa)) are domain IV, binds dsDNA.

This sequence belongs to the DnaA family. As to quaternary structure, oligomerizes as a right-handed, spiral filament on DNA at oriC.

The protein localises to the cytoplasm. Plays an essential role in the initiation and regulation of chromosomal replication. ATP-DnaA binds to the origin of replication (oriC) to initiate formation of the DNA replication initiation complex once per cell cycle. Binds the DnaA box (a 9 base pair repeat at the origin) and separates the double-stranded (ds)DNA. Forms a right-handed helical filament on oriC DNA; dsDNA binds to the exterior of the filament while single-stranded (ss)DNA is stabiized in the filament's interior. The ATP-DnaA-oriC complex binds and stabilizes one strand of the AT-rich DNA unwinding element (DUE), permitting loading of DNA polymerase. After initiation quickly degrades to an ADP-DnaA complex that is not apt for DNA replication. Binds acidic phospholipids. In Psychromonas ingrahamii (strain DSM 17664 / CCUG 51855 / 37), this protein is Chromosomal replication initiator protein DnaA.